The sequence spans 120 residues: Large ribosomal subunit protein uL18 (120 aa).

Belongs to the universal ribosomal protein uL18 family. As to quaternary structure, part of the 50S ribosomal subunit; part of the 5S rRNA/L5/L18/L25 subcomplex. Contacts the 5S and 23S rRNAs.

This is one of the proteins that bind and probably mediate the attachment of the 5S RNA into the large ribosomal subunit, where it forms part of the central protuberance. The polypeptide is Large ribosomal subunit protein uL18 (Rhodospirillum centenum (strain ATCC 51521 / SW)).